Here is a 538-residue protein sequence, read N- to C-terminus: MTDLNKVINELGALGIHDVKEIVYNPSYEQLFEEETKPGLEGYEKGIVTQSGAVAVDTGIFTGRSPKDKYIVLDDKTKDTVWWTSDAAKNDNKPMTQDTWKSLKGLVTEQLSGKRLFVIDAFCGANADTRLSVRIVTEVAWQAHFVKNMFIRPTEAELVGFKPDFVVMNGSKVTNPNWKEQGLNSENFVAFNLTEGVQLIGGTWYGGEMKKGMFSMMNYFLPLKGIASMHCSANVGEKGDVAVFFGLSGTGKTTLSTDPKRQLIGDDEHGWDDDGVFNYEGGCYAKTIKLSPENEPDIYKAIKRDALLENVVVRADGSVDYDDGSKTENTRVSYPIYHIDNIVTPVSKAGHAKKVIFLTADAFGVLPPVSKLTPEQTKYYFLSGFTAKLAGTERGITEPTPTFSACFGAAFLSLHPTQYAEVLVKRMEAAGAEAYLVNTGWNGTGKRISIKDTRGIIDAILDGSIEKAEMGKLPIFDLAIPTALPGVDPAILDPRDTYADKAQWQAKAEDLAGRFVKNFEKYTTNDEGKALVAAGPKA.

Substrate-binding residues include R64, Y205, and K211. ATP contacts are provided by residues K211, H230, and 246 to 254; that span reads GLSGTGKTT. Mn(2+)-binding residues include K211 and H230. D267 lines the Mn(2+) pocket. ATP-binding positions include E295, R331, 447–448, and T453; that span reads RI. R331 is a binding site for substrate.

This sequence belongs to the phosphoenolpyruvate carboxykinase (ATP) family. As to quaternary structure, monomer. Mn(2+) is required as a cofactor.

Its subcellular location is the cytoplasm. It catalyses the reaction oxaloacetate + ATP = phosphoenolpyruvate + ADP + CO2. Its pathway is carbohydrate biosynthesis; gluconeogenesis. Involved in the gluconeogenesis. Catalyzes the conversion of oxaloacetate (OAA) to phosphoenolpyruvate (PEP) through direct phosphoryl transfer between the nucleoside triphosphate and OAA. In Pasteurella multocida (strain Pm70), this protein is Phosphoenolpyruvate carboxykinase (ATP).